The following is a 268-amino-acid chain: Mediator of RNA polymerase II transcription subunit 8 (268 aa).

A coiled-coil region spans residues 1 to 29 (MQREEKQLEASLDALLNQVADLKNSLGSF). Ser-82 is subject to Phosphoserine. The stretch at 133–163 (ADAAQKQIQSLNKMCSNLLEKISKEERESES) forms a coiled coil. Positions 142–151 (SLNKMCSNLL) are interaction with the Elongin BC complex. Disordered regions lie at residues 156–176 (KEER…FNPG) and 193–268 (NWRP…PYQR). Positions 200–209 (SGPGQPGQPG) are enriched in gly residues.

This sequence belongs to the Mediator complex subunit 8 family. Component of the Mediator complex, which is composed of MED1, MED4, MED6, MED7, MED8, MED9, MED10, MED11, MED12, MED13, MED13L, MED14, MED15, MED16, MED17, MED18, MED19, MED20, MED21, MED22, MED23, MED24, MED25, MED26, MED27, MED29, MED30, MED31, CCNC, CDK8 and CDC2L6/CDK11. The MED12, MED13, CCNC and CDK8 subunits form a distinct module termed the CDK8 module. Mediator containing the CDK8 module is less active than Mediator lacking this module in supporting transcriptional activation. Individual preparations of the Mediator complex lacking one or more distinct subunits have been variously termed ARC, CRSP, DRIP, PC2, SMCC and TRAP. May be part of a multisubunit E3 ubiquitin-protein ligase complex with the Elongin BC complex (ELOB and ELOC), CUL2 and RBX1.

The protein resides in the nucleus. It functions in the pathway protein modification; protein ubiquitination. Its function is as follows. Component of the Mediator complex, a coactivator involved in the regulated transcription of nearly all RNA polymerase II-dependent genes. Mediator functions as a bridge to convey information from gene-specific regulatory proteins to the basal RNA polymerase II transcription machinery. Mediator is recruited to promoters by direct interactions with regulatory proteins and serves as a scaffold for the assembly of a functional preinitiation complex with RNA polymerase II and the general transcription factors. May play a role as a target recruitment subunit in E3 ubiquitin-protein ligase complexes and thus in ubiquitination and subsequent proteasomal degradation of target proteins. In Mus musculus (Mouse), this protein is Mediator of RNA polymerase II transcription subunit 8 (Med8).